The sequence spans 87 residues: Phosphoribosyl-ATP pyrophosphatase (87 aa).

Belongs to the PRA-PH family.

It localises to the cytoplasm. The enzyme catalyses 1-(5-phospho-beta-D-ribosyl)-ATP + H2O = 1-(5-phospho-beta-D-ribosyl)-5'-AMP + diphosphate + H(+). The protein operates within amino-acid biosynthesis; L-histidine biosynthesis; L-histidine from 5-phospho-alpha-D-ribose 1-diphosphate: step 2/9. This Beutenbergia cavernae (strain ATCC BAA-8 / DSM 12333 / CCUG 43141 / JCM 11478 / NBRC 16432 / NCIMB 13614 / HKI 0122) protein is Phosphoribosyl-ATP pyrophosphatase.